We begin with the raw amino-acid sequence, 513 residues long: Cobyric acid synthase (513 aa).

The region spanning 252-457 (KIDIAVIRLP…LHGIFDEEGI (206 aa)) is the GATase cobBQ-type domain. Cys-333 (nucleophile) is an active-site residue. The active site involves His-449.

The protein belongs to the CobB/CobQ family. CobQ subfamily.

It participates in cofactor biosynthesis; adenosylcobalamin biosynthesis. In terms of biological role, catalyzes amidations at positions B, D, E, and G on adenosylcobyrinic A,C-diamide. NH(2) groups are provided by glutamine, and one molecule of ATP is hydrogenolyzed for each amidation. The sequence is that of Cobyric acid synthase from Lachnoclostridium phytofermentans (strain ATCC 700394 / DSM 18823 / ISDg) (Clostridium phytofermentans).